A 704-amino-acid polypeptide reads, in one-letter code: Elongation factor G (704 aa).

Residues 10 to 290 (TKVRNIGIMA…AVVDYLPSPL (281 aa)) enclose the tr-type G domain. Residues 19 to 26 (AHIDAGKT), 83 to 87 (DTPGH), and 137 to 140 (NKMD) each bind GTP.

The protein belongs to the TRAFAC class translation factor GTPase superfamily. Classic translation factor GTPase family. EF-G/EF-2 subfamily.

Its subcellular location is the cytoplasm. In terms of biological role, catalyzes the GTP-dependent ribosomal translocation step during translation elongation. During this step, the ribosome changes from the pre-translocational (PRE) to the post-translocational (POST) state as the newly formed A-site-bound peptidyl-tRNA and P-site-bound deacylated tRNA move to the P and E sites, respectively. Catalyzes the coordinated movement of the two tRNA molecules, the mRNA and conformational changes in the ribosome. The protein is Elongation factor G of Beutenbergia cavernae (strain ATCC BAA-8 / DSM 12333 / CCUG 43141 / JCM 11478 / NBRC 16432 / NCIMB 13614 / HKI 0122).